The primary structure comprises 204 residues: Kunitz-type trypsin inhibitor KTI2 (204 aa).

The first 25 residues, 1–25 (MKSTIFFALFLVCAFTISYLPSATA), serve as a signal peptide directing secretion. 2 cysteine pairs are disulfide-bonded: C65–C112 and C160–C169.

Belongs to the protease inhibitor I3 (leguminous Kunitz-type inhibitor) family. Seed, and at low levels in leaf, root, and stem.

Functionally, has probably no trypsin inhibitor activity. KTi2 is responsible for most of the Kunitz trypsin inhibitor activity and protein found in soybean seeds. The chain is Kunitz-type trypsin inhibitor KTI2 (KTI2) from Glycine max (Soybean).